A 734-amino-acid polypeptide reads, in one-letter code: MALRFPRFSQGLAQDPTTRRIWFGIATAHDFESHDDITEERLYQNIFASHFGQLAIIFLWTSGNLFHVAWQGNFETWVQDPLHVRPIAHAIWDPHFGQPAVEAFTRGGALGPVNIAYSGVYQWWYTIGLRTNEDLYTGALFLLFLSAISLIGGWLHLQPKWKPRVSWFKNAESRLNHHLSGLFGVSSLAWTGHLVHVAIPASRGEYVRWNNLLNVLPHPQGLGPLFTGQWNLYAQNPDSSSHLFGTSQGSGTAILTLLGGFHPQTQSLWLTDIAHHHLAIAILFLIAGHMYRTNFGIGHSIKDLLEAHIPPGGRLGRGHKGLYDTINNSIHFQLGLALASLGVITSLVAQHMYSLPAYAFIAQDFTTQAALYTHHQYIAGFIMTGAFAHGAIFFIRDYNPEQNEDNVLARMLDHKEAIISHLSWASLFLGFHTLGLYVHNDVMLAFGTPEKQILIEPIFAQWIQSAHGKTSYGFDVLLSSTNGPAFNAGRSIWLPGWLNAINENSNSLFLTIGPGDFLVHHAIALGLHTTTLILVKGALDARGSKLMPDKKDFGYSFPCDGPGRGGTCDISAWDAFYLAVFWMLNTIGWVTFYWHWKHITLWQGNVSQFNESSTYLMGWLRDYLWLNSSQLINGYNPFGMNSLSVWAWMFLFGHLVWATGFMFLISWRGYWQELIETLAWAHERTPLANLIRWKDKPVALSIVQARLVGLAHFSVGYIFTYAAFLIASTSGKFG.

8 consecutive transmembrane segments (helical) span residues 46–69 (IFAS…FHVA), 135–158 (LYTG…LHLQ), 175–199 (LNHH…HVAI), 273–291 (IAHH…GHMY), 330–353 (IHFQ…QHMY), 369–395 (AALY…IFFI), 417–439 (AIIS…LYVH), and 517–535 (FLVH…LILV). Residues Cys-559 and Cys-568 each coordinate [4Fe-4S] cluster. The next 2 membrane-spanning stretches (helical) occupy residues 575 to 596 (AFYL…YWHW) and 643 to 665 (LSVW…MFLI). His-654, Met-662, and Tyr-670 together coordinate chlorophyll a. Trp-671 is a binding site for phylloquinone. The helical transmembrane segment at 707–727 (LVGLAHFSVGYIFTYAAFLIA) threads the bilayer.

This sequence belongs to the PsaA/PsaB family. As to quaternary structure, the PsaA/B heterodimer binds the P700 chlorophyll special pair and subsequent electron acceptors. PSI consists of a core antenna complex that captures photons, and an electron transfer chain that converts photonic excitation into a charge separation. The eukaryotic PSI reaction center is composed of at least 11 subunits. It depends on P700 is a chlorophyll a/chlorophyll a' dimer, A0 is one or more chlorophyll a, A1 is one or both phylloquinones and FX is a shared 4Fe-4S iron-sulfur center. as a cofactor.

The protein resides in the plastid. It is found in the chloroplast thylakoid membrane. It catalyses the reaction reduced [plastocyanin] + hnu + oxidized [2Fe-2S]-[ferredoxin] = oxidized [plastocyanin] + reduced [2Fe-2S]-[ferredoxin]. Functionally, psaA and PsaB bind P700, the primary electron donor of photosystem I (PSI), as well as the electron acceptors A0, A1 and FX. PSI is a plastocyanin-ferredoxin oxidoreductase, converting photonic excitation into a charge separation, which transfers an electron from the donor P700 chlorophyll pair to the spectroscopically characterized acceptors A0, A1, FX, FA and FB in turn. Oxidized P700 is reduced on the lumenal side of the thylakoid membrane by plastocyanin. This is Photosystem I P700 chlorophyll a apoprotein A2 from Aethionema cordifolium (Lebanon stonecress).